A 328-amino-acid chain; its full sequence is Fructose-1,6-bisphosphatase class 1 (328 aa).

4 residues coordinate Mg(2+): Glu-91, Asp-110, Leu-112, and Asp-113. Substrate-binding positions include 113 to 116 (DGSS), Asn-205, and 257 to 259 (YLY). Glu-277 contributes to the Mg(2+) binding site.

Belongs to the FBPase class 1 family. In terms of assembly, homotetramer. The cofactor is Mg(2+).

Its subcellular location is the cytoplasm. The catalysed reaction is beta-D-fructose 1,6-bisphosphate + H2O = beta-D-fructose 6-phosphate + phosphate. It functions in the pathway carbohydrate biosynthesis; gluconeogenesis. The polypeptide is Fructose-1,6-bisphosphatase class 1 (Azorhizobium caulinodans (strain ATCC 43989 / DSM 5975 / JCM 20966 / LMG 6465 / NBRC 14845 / NCIMB 13405 / ORS 571)).